The primary structure comprises 466 residues: Methylenetetrahydrofolate--tRNA-(uracil-5-)-methyltransferase TrmFO (466 aa).

10 to 15 (GGGLAG) lines the FAD pocket.

Belongs to the MnmG family. TrmFO subfamily. It depends on FAD as a cofactor.

It is found in the cytoplasm. The enzyme catalyses uridine(54) in tRNA + (6R)-5,10-methylene-5,6,7,8-tetrahydrofolate + NADH + H(+) = 5-methyluridine(54) in tRNA + (6S)-5,6,7,8-tetrahydrofolate + NAD(+). It catalyses the reaction uridine(54) in tRNA + (6R)-5,10-methylene-5,6,7,8-tetrahydrofolate + NADPH + H(+) = 5-methyluridine(54) in tRNA + (6S)-5,6,7,8-tetrahydrofolate + NADP(+). Its function is as follows. Catalyzes the folate-dependent formation of 5-methyl-uridine at position 54 (M-5-U54) in all tRNAs. The chain is Methylenetetrahydrofolate--tRNA-(uracil-5-)-methyltransferase TrmFO from Phenylobacterium zucineum (strain HLK1).